Reading from the N-terminus, the 267-residue chain is Phosphonates import ATP-binding protein PhnC 1 (267 aa).

The 245-residue stretch at 3–247 (LSLDGVDLVH…ALDALYANEQ (245 aa)) folds into the ABC transporter domain. 36–43 (GPSGAGKT) contacts ATP.

Belongs to the ABC transporter superfamily. Phosphonates importer (TC 3.A.1.9.1) family. As to quaternary structure, the complex is composed of two ATP-binding proteins (PhnC), two transmembrane proteins (PhnE) and a solute-binding protein (PhnD).

Its subcellular location is the cell inner membrane. The catalysed reaction is phosphonate(out) + ATP + H2O = phosphonate(in) + ADP + phosphate + H(+). In terms of biological role, part of the ABC transporter complex PhnCDE involved in phosphonates import. Responsible for energy coupling to the transport system. The sequence is that of Phosphonates import ATP-binding protein PhnC 1 from Pseudomonas aeruginosa (strain ATCC 15692 / DSM 22644 / CIP 104116 / JCM 14847 / LMG 12228 / 1C / PRS 101 / PAO1).